Reading from the N-terminus, the 272-residue chain is Glutamate racemase (272 aa).

Substrate is bound by residues 13-14 and 45-46; these read DS and YG. Catalysis depends on Cys-76, which acts as the Proton donor/acceptor. Residue 77-78 coordinates substrate; it reads NT. The active-site Proton donor/acceptor is the Cys-187. Residue 188-189 coordinates substrate; the sequence is TH.

This sequence belongs to the aspartate/glutamate racemases family.

The catalysed reaction is L-glutamate = D-glutamate. The protein operates within cell wall biogenesis; peptidoglycan biosynthesis. Its function is as follows. Provides the (R)-glutamate required for cell wall biosynthesis. This is Glutamate racemase from Roseiflexus sp. (strain RS-1).